We begin with the raw amino-acid sequence, 588 residues long: Proteasome-associated ATPase (588 aa).

Residues 1 to 10 (MAAHDDDMNR) are compositionally biased toward basic and acidic residues. Residues 1-23 (MAAHDDDMNRGIRPGRGSDDPSG) are disordered. The stretch at 47 to 94 (RILEERIVELQTNLAGVSAQNERLANTLREARDQIVALKEEVDRLAQP) forms a coiled coil. 276 to 281 (GCGKTL) lines the ATP pocket. Positions 587–588 (YL) are docks into pockets in the proteasome alpha-ring.

This sequence belongs to the AAA ATPase family. In terms of assembly, homohexamer. Assembles into a hexameric ring structure that caps the 20S proteasome core. Strongly interacts with the prokaryotic ubiquitin-like protein Pup through a hydrophobic interface; the interacting region of ARC lies in its N-terminal coiled-coil domain. There is one Pup binding site per ARC hexamer ring. Upon ATP-binding, the C-terminus of ARC interacts with the alpha-rings of the proteasome core, possibly by binding to the intersubunit pockets.

It participates in protein degradation; proteasomal Pup-dependent pathway. In terms of biological role, ATPase which is responsible for recognizing, binding, unfolding and translocation of pupylated proteins into the bacterial 20S proteasome core particle. May be essential for opening the gate of the 20S proteasome via an interaction with its C-terminus, thereby allowing substrate entry and access to the site of proteolysis. Thus, the C-termini of the proteasomal ATPase may function like a 'key in a lock' to induce gate opening and therefore regulate proteolysis. This Streptomyces scabiei (strain 87.22) protein is Proteasome-associated ATPase.